The primary structure comprises 214 residues: tRNA (guanine-N(7)-)-methyltransferase (214 aa).

4 residues coordinate S-adenosyl-L-methionine: glutamate 43, glutamate 68, aspartate 95, and aspartate 117. Aspartate 117 is a catalytic residue. Substrate is bound by residues lysine 121, aspartate 153, and 191-194; that span reads TEYE.

Belongs to the class I-like SAM-binding methyltransferase superfamily. TrmB family.

It carries out the reaction guanosine(46) in tRNA + S-adenosyl-L-methionine = N(7)-methylguanosine(46) in tRNA + S-adenosyl-L-homocysteine. It participates in tRNA modification; N(7)-methylguanine-tRNA biosynthesis. Its function is as follows. Catalyzes the formation of N(7)-methylguanine at position 46 (m7G46) in tRNA. The protein is tRNA (guanine-N(7)-)-methyltransferase of Lachnoclostridium phytofermentans (strain ATCC 700394 / DSM 18823 / ISDg) (Clostridium phytofermentans).